A 521-amino-acid polypeptide reads, in one-letter code: Cytochrome P450 1A1 (521 aa).

Phe-229 is a substrate binding site. Position 463 (Cys-463) interacts with heme.

It belongs to the cytochrome P450 family. Heme is required as a cofactor.

The protein resides in the endoplasmic reticulum membrane. It localises to the microsome membrane. The catalysed reaction is an organic molecule + reduced [NADPH--hemoprotein reductase] + O2 = an alcohol + oxidized [NADPH--hemoprotein reductase] + H2O + H(+). Its function is as follows. Cytochromes P450 are a group of heme-thiolate monooxygenases. They oxidize a variety of structurally unrelated compounds, including steroids, fatty acids, and xenobiotics. The sequence is that of Cytochrome P450 1A1 (cyp1a1) from Limanda limanda (Common dab).